The following is a 314-amino-acid chain: Glycerate dehydrogenase (314 aa).

NAD(+)-binding positions include Thr-74, 157–158, 228–230, and Asp-254; these read AL and TAR. Arg-230 is a catalytic residue. The active site involves Glu-259. Residue His-280 is the Proton donor of the active site. 280–283 serves as a coordination point for NAD(+); it reads HVAW.

It belongs to the D-isomer specific 2-hydroxyacid dehydrogenase family. Homodimer.

It is found in the cytoplasm. It catalyses the reaction (R)-glycerate + NAD(+) = 3-hydroxypyruvate + NADH + H(+). It participates in one-carbon metabolism; formaldehyde assimilation via serine pathway. In terms of biological role, plays a central role in assimilation of carbon. It converts hydroxypyruvate to glycerate as a key step in the serine cycle, and may also play an important role in C2 reactions, by interconverting glyoxylate and glycolate. This Methylorubrum extorquens (strain ATCC 14718 / DSM 1338 / JCM 2805 / NCIMB 9133 / AM1) (Methylobacterium extorquens) protein is Glycerate dehydrogenase (hprA).